Here is a 430-residue protein sequence, read N- to C-terminus: Serine--tRNA ligase (430 aa).

237–239 (TAE) provides a ligand contact to L-serine. 268–270 (RAE) serves as a coordination point for ATP. Glu-291 is an L-serine binding site. Residue 355 to 358 (EISS) participates in ATP binding. L-serine is bound at residue Ser-391.

It belongs to the class-II aminoacyl-tRNA synthetase family. Type-1 seryl-tRNA synthetase subfamily. Homodimer. The tRNA molecule binds across the dimer.

It localises to the cytoplasm. The catalysed reaction is tRNA(Ser) + L-serine + ATP = L-seryl-tRNA(Ser) + AMP + diphosphate + H(+). The enzyme catalyses tRNA(Sec) + L-serine + ATP = L-seryl-tRNA(Sec) + AMP + diphosphate + H(+). It participates in aminoacyl-tRNA biosynthesis; selenocysteinyl-tRNA(Sec) biosynthesis; L-seryl-tRNA(Sec) from L-serine and tRNA(Sec): step 1/1. Functionally, catalyzes the attachment of serine to tRNA(Ser). Is also able to aminoacylate tRNA(Sec) with serine, to form the misacylated tRNA L-seryl-tRNA(Sec), which will be further converted into selenocysteinyl-tRNA(Sec). The chain is Serine--tRNA ligase from Serratia proteamaculans (strain 568).